We begin with the raw amino-acid sequence, 140 residues long: Lymphocyte antigen 6H (140 aa).

Residues 1–25 (MLPAAMKGLGLVLLAALLCSSPAHG) form the signal peptide. The UPAR/Ly6 domain occupies 26–91 (LWCQDCTLTT…RHFFSDYLMG (66 aa)). 5 disulfide bridges follow: Cys-28-Cys-52, Cys-31-Cys-40, Cys-45-Cys-73, Cys-77-Cys-104, and Cys-105-Cys-110. N-linked (GlcNAc...) asparagine glycosylation occurs at Asn-36.

It localises to the cell membrane. The polypeptide is Lymphocyte antigen 6H (LY6H) (Bos taurus (Bovine)).